A 139-amino-acid polypeptide reads, in one-letter code: Small ribosomal subunit protein uS12 (139 aa).

Positions 118-139 (AGVANRNQSRSRYGTKKPKPKS) are disordered. A compositionally biased stretch (basic residues) spans 130–139 (YGTKKPKPKS).

It belongs to the universal ribosomal protein uS12 family. As to quaternary structure, part of the 30S ribosomal subunit. Contacts proteins S8 and S17. May interact with IF1 in the 30S initiation complex.

With S4 and S5 plays an important role in translational accuracy. In terms of biological role, interacts with and stabilizes bases of the 16S rRNA that are involved in tRNA selection in the A site and with the mRNA backbone. Located at the interface of the 30S and 50S subunits, it traverses the body of the 30S subunit contacting proteins on the other side and probably holding the rRNA structure together. The combined cluster of proteins S8, S12 and S17 appears to hold together the shoulder and platform of the 30S subunit. The chain is Small ribosomal subunit protein uS12 from Mycoplasma mobile (strain ATCC 43663 / 163K / NCTC 11711) (Mesomycoplasma mobile).